The following is a 335-amino-acid chain: Glucokinase (335 aa).

11 to 16 (ADIGGT) provides a ligand contact to ATP.

The protein belongs to the bacterial glucokinase family.

It is found in the cytoplasm. The enzyme catalyses D-glucose + ATP = D-glucose 6-phosphate + ADP + H(+). The sequence is that of Glucokinase from Stenotrophomonas maltophilia (strain K279a).